A 187-amino-acid chain; its full sequence is Probable nicotinate-nucleotide adenylyltransferase (187 aa).

This sequence belongs to the NadD family.

It catalyses the reaction nicotinate beta-D-ribonucleotide + ATP + H(+) = deamido-NAD(+) + diphosphate. The protein operates within cofactor biosynthesis; NAD(+) biosynthesis; deamido-NAD(+) from nicotinate D-ribonucleotide: step 1/1. Its function is as follows. Catalyzes the reversible adenylation of nicotinate mononucleotide (NaMN) to nicotinic acid adenine dinucleotide (NaAD). This is Probable nicotinate-nucleotide adenylyltransferase from Agrobacterium fabrum (strain C58 / ATCC 33970) (Agrobacterium tumefaciens (strain C58)).